Consider the following 216-residue polypeptide: ATP phosphoribosyltransferase (216 aa).

This sequence belongs to the ATP phosphoribosyltransferase family. Short subfamily. As to quaternary structure, heteromultimer composed of HisG and HisZ subunits.

It is found in the cytoplasm. It carries out the reaction 1-(5-phospho-beta-D-ribosyl)-ATP + diphosphate = 5-phospho-alpha-D-ribose 1-diphosphate + ATP. It participates in amino-acid biosynthesis; L-histidine biosynthesis; L-histidine from 5-phospho-alpha-D-ribose 1-diphosphate: step 1/9. Functionally, catalyzes the condensation of ATP and 5-phosphoribose 1-diphosphate to form N'-(5'-phosphoribosyl)-ATP (PR-ATP). Has a crucial role in the pathway because the rate of histidine biosynthesis seems to be controlled primarily by regulation of HisG enzymatic activity. This is ATP phosphoribosyltransferase from Chromohalobacter salexigens (strain ATCC BAA-138 / DSM 3043 / CIP 106854 / NCIMB 13768 / 1H11).